Reading from the N-terminus, the 194-residue chain is Protein LKAAEAR1 (194 aa).

The disordered stretch occupies residues 1-45 (MPPPAKEGGRKGPRERSGKSAPGTAQGEERAKGAPATEPPKPGWA). A compositionally biased stretch (basic and acidic residues) spans 7–18 (EGGRKGPRERSG).

In Homo sapiens (Human), this protein is Protein LKAAEAR1 (LKAAEAR1).